The primary structure comprises 606 residues: Elongation factor 4 (606 aa).

In terms of domain architecture, tr-type G spans Ser-7–Lys-189. GTP-binding positions include Asp-19 to Thr-24 and Asn-136 to Asp-139.

It belongs to the TRAFAC class translation factor GTPase superfamily. Classic translation factor GTPase family. LepA subfamily.

It is found in the cell inner membrane. The enzyme catalyses GTP + H2O = GDP + phosphate + H(+). Functionally, required for accurate and efficient protein synthesis under certain stress conditions. May act as a fidelity factor of the translation reaction, by catalyzing a one-codon backward translocation of tRNAs on improperly translocated ribosomes. Back-translocation proceeds from a post-translocation (POST) complex to a pre-translocation (PRE) complex, thus giving elongation factor G a second chance to translocate the tRNAs correctly. Binds to ribosomes in a GTP-dependent manner. In Synechococcus sp. (strain CC9605), this protein is Elongation factor 4.